We begin with the raw amino-acid sequence, 322 residues long: MSSNLIKSFGLIAIGAISGVTFTHFYYKGYQGSDVPDLTPRYTKFDSAGRALESIYDFNATKFFQYGIPGPVADQRVNHGYMSVFDRRTRNPFYTAETITQESLNQRKGNRRYSEFVPDDNIPEMFQAKLGDYRGSGYDRGHQVPAADCKFSQEAMNETFYLSNMCPQVGDGFNRNYWAYFEDWCRRLTSKYGSVTIMTGPLYLPKKNERGQWEVQYRVIGNPPNVAVPTHFFKVIIAEKSGEPTSSPSVAAFVLPNKPIADNFPLKNFAVPVEVVERASGLEILSNVPKGNRKQLCSEVVCQLNVKEFVESVKQKQKNQGK.

The active-site Proton acceptor is His142. Asn174 serves as a coordination point for Mg(2+).

Belongs to the DNA/RNA non-specific endonuclease family. As to quaternary structure, homodimer. Requires Mn(2+) as cofactor. It depends on Mg(2+) as a cofactor.

It localises to the mitochondrion inner membrane. This enzyme has both RNase and DNase activity. It degrades single-stranded DNA and RNA. This Schizosaccharomyces pombe (strain 972 / ATCC 24843) (Fission yeast) protein is Nuclease 1, mitochondrial (pnu1).